The sequence spans 416 residues: Carboxypeptidase B (416 aa).

Positions 1 to 15 (MAFLILVTLALASAH) are cleaved as a signal peptide. Residues 16–109 (YSGEHFEGEK…LEGQFGRQVP (94 aa)) constitute a propeptide, activation peptide. Positions 117 to 411 (KYNRWETIEA…LAIKHLARYV (295 aa)) constitute a Peptidase M14 domain. Zn(2+) is bound by residues His175 and Glu178. Residues 175–178 (HARE), Arg233, and 250–251 (TR) each bind substrate. Intrachain disulfides connect Cys244/Cys267 and Cys258/Cys272. His303 contributes to the Zn(2+) binding site. Residues 304 to 305 (SY) and Tyr355 contribute to the substrate site. Glu377 (proton donor/acceptor) is an active-site residue.

It belongs to the peptidase M14 family. The cofactor is Zn(2+).

The protein resides in the secreted. The protein localises to the zymogen granule lumen. The enzyme catalyses Preferential release of a C-terminal lysine or arginine amino acid.. This is Carboxypeptidase B (CPB1) from Canis lupus familiaris (Dog).